The chain runs to 124 residues: Phosphoribosyl-AMP cyclohydrolase (124 aa).

D82 is a Mg(2+) binding site. Residue C83 coordinates Zn(2+). Mg(2+) contacts are provided by D84 and D86. Zn(2+)-binding residues include C99 and C106.

The protein belongs to the PRA-CH family. In terms of assembly, homodimer. Mg(2+) serves as cofactor. The cofactor is Zn(2+).

The protein localises to the cytoplasm. The enzyme catalyses 1-(5-phospho-beta-D-ribosyl)-5'-AMP + H2O = 1-(5-phospho-beta-D-ribosyl)-5-[(5-phospho-beta-D-ribosylamino)methylideneamino]imidazole-4-carboxamide. It functions in the pathway amino-acid biosynthesis; L-histidine biosynthesis; L-histidine from 5-phospho-alpha-D-ribose 1-diphosphate: step 3/9. Functionally, catalyzes the hydrolysis of the adenine ring of phosphoribosyl-AMP. The protein is Phosphoribosyl-AMP cyclohydrolase of Zymomonas mobilis subsp. mobilis (strain ATCC 31821 / ZM4 / CP4).